Consider the following 369-residue polypeptide: Anhydro-N-acetylmuramic acid kinase (369 aa).

11-18 (GTSMDAVD) serves as a coordination point for ATP.

This sequence belongs to the anhydro-N-acetylmuramic acid kinase family.

It catalyses the reaction 1,6-anhydro-N-acetyl-beta-muramate + ATP + H2O = N-acetyl-D-muramate 6-phosphate + ADP + H(+). It functions in the pathway amino-sugar metabolism; 1,6-anhydro-N-acetylmuramate degradation. Its pathway is cell wall biogenesis; peptidoglycan recycling. Its function is as follows. Catalyzes the specific phosphorylation of 1,6-anhydro-N-acetylmuramic acid (anhMurNAc) with the simultaneous cleavage of the 1,6-anhydro ring, generating MurNAc-6-P. Is required for the utilization of anhMurNAc either imported from the medium or derived from its own cell wall murein, and thus plays a role in cell wall recycling. The polypeptide is Anhydro-N-acetylmuramic acid kinase (Idiomarina loihiensis (strain ATCC BAA-735 / DSM 15497 / L2-TR)).